The sequence spans 470 residues: Myricetin 3-O-rhamnoside 1,2-glucosyltransferase UGT709G2 (470 aa).

The active-site Proton acceptor is His20. His20 contacts an anthocyanidin. Asp117 acts as the Charge relay in catalysis. UDP-alpha-D-glucose is bound by residues Ala340, Gln342, His357, Trp360, Asn361, Ser362, and Glu365. An anthocyanidin is bound at residue Ala380. Residues Asp381 and Gln382 each contribute to the UDP-alpha-D-glucose site.

It belongs to the UDP-glycosyltransferase family. In terms of tissue distribution, expressed in young cromes.

The enzyme catalyses myricetin 3-O-alpha-L-rhamnoside + UDP-alpha-D-glucose = myricetin 3-O-[beta-D-glucosyl-(1-&gt;2)-alpha-L-rhamnoside] + UDP + H(+). It functions in the pathway flavonoid metabolism. In terms of biological role, glucosyltransferase involved in montbretin A (MbA) biosynthesis. Catalyzes the glucosylation of myricetin 3-O-alpha-L-rhamnoside (MR) to produce myricetin 3-O-[beta-D-glucosyl-(1-&gt;2)-alpha-L-rhamnoside] (MRG), a precursor of MbA. MbA is a potent inhibitor of human pancreatic alpha-amylase and is being developed as drug candidate to treat type-2 diabetes. In vitro, is able to transfer UDP-xylose with 50-fold less efficiency compared with UDP-glucose. In vitro, can use myricetin 3-O-glucoside and quercetin 3-O-glucoside as substrates, although these two flavonoids may not be physiological substrates in vivo. The protein is Myricetin 3-O-rhamnoside 1,2-glucosyltransferase UGT709G2 of Crocosmia x crocosmiiflora (Montbretia).